Here is a 586-residue protein sequence, read N- to C-terminus: Eukaryotic translation initiation factor 3 subunit D (586 aa).

The tract at residues 102 to 176 (SAKRTFGRGG…DKPQRTREPS (75 aa)) is disordered. The span at 162 to 174 (GWKDYDKPQRTRE) shows a compositional bias: basic and acidic residues. The segment at 301–315 (SLDLVTVNENAADAP) is RNA gate. The interval 567–586 (EEEEEVAAEEQEAAEEEAEE) is disordered.

It belongs to the eIF-3 subunit D family. In terms of assembly, component of the eukaryotic translation initiation factor 3 (eIF-3) complex.

It is found in the cytoplasm. MRNA cap-binding component of the eukaryotic translation initiation factor 3 (eIF-3) complex, which is involved in protein synthesis of a specialized repertoire of mRNAs and, together with other initiation factors, stimulates binding of mRNA and methionyl-tRNAi to the 40S ribosome. The eIF-3 complex specifically targets and initiates translation of a subset of mRNAs involved in cell proliferation. In the eIF-3 complex, eif3d specifically recognizes and binds the 7-methylguanosine cap of a subset of mRNAs. The sequence is that of Eukaryotic translation initiation factor 3 subunit D from Aspergillus niger (strain ATCC MYA-4892 / CBS 513.88 / FGSC A1513).